The following is a 152-amino-acid chain: FMN reductase (NADH) RutF (152 aa).

Belongs to the non-flavoprotein flavin reductase family. RutF subfamily.

The enzyme catalyses FMNH2 + NAD(+) = FMN + NADH + 2 H(+). In terms of biological role, catalyzes the reduction of FMN to FMNH2 which is used to reduce pyrimidine by RutA via the Rut pathway. This is FMN reductase (NADH) RutF from Shigella dysenteriae serotype 1 (strain Sd197).